The sequence spans 526 residues: Bifunctional purine biosynthesis protein PurH (526 aa).

The region spanning aspartate 15–valine 161 is the MGS-like domain.

Belongs to the PurH family.

It carries out the reaction (6R)-10-formyltetrahydrofolate + 5-amino-1-(5-phospho-beta-D-ribosyl)imidazole-4-carboxamide = 5-formamido-1-(5-phospho-D-ribosyl)imidazole-4-carboxamide + (6S)-5,6,7,8-tetrahydrofolate. It catalyses the reaction IMP + H2O = 5-formamido-1-(5-phospho-D-ribosyl)imidazole-4-carboxamide. It participates in purine metabolism; IMP biosynthesis via de novo pathway; 5-formamido-1-(5-phospho-D-ribosyl)imidazole-4-carboxamide from 5-amino-1-(5-phospho-D-ribosyl)imidazole-4-carboxamide (10-formyl THF route): step 1/1. It functions in the pathway purine metabolism; IMP biosynthesis via de novo pathway; IMP from 5-formamido-1-(5-phospho-D-ribosyl)imidazole-4-carboxamide: step 1/1. The chain is Bifunctional purine biosynthesis protein PurH from Leifsonia xyli subsp. xyli (strain CTCB07).